A 362-amino-acid polypeptide reads, in one-letter code: MSTNPNPWSPYDSYNDCSQGICNIYCPQWCYLIFPPPPPSFFLDDDSSSSSSSFSPLLIALIGILTSALILVSYYTLISKYCHRHHQTSSSETLNLNHNGEGFFSSTQRISTNGDGLNESMIKSITVYKYKSGDGFVDGSDCSVCLSEFEENESLRLLPKCNHAFHLPCIDTWLKSHSNCPLCRAFVTGVNNPTASVGQNVSVVVANQSNSAHQTGSVSEINLNLAGYESQTGDFDSVVVIEDLEIGSRNSDARSELQLPEERRETKDEDSLPIRRSVSLNSGVVVSIADVLREIEDEEGESGGVGTSQRREEGEDGDGKTIPPTEANQRSGGVSGFFVRSLSTGRFIFSRYDRGRNYRLPL.

Residues 58–78 (LIALIGILTSALILVSYYTLI) traverse the membrane as a helical segment. An RING-type; atypical zinc finger spans residues 142-184 (CSVCLSEFEENESLRLLPKCNHAFHLPCIDTWLKSHSNCPLCR). Disordered stretches follow at residues 252–271 (DARS…DEDS) and 296–333 (EDEE…RSGG). A compositionally biased stretch (basic and acidic residues) spans 309–319 (QRREEGEDGDG).

It belongs to the RING-type zinc finger family. ATL subfamily. Expressed in flowers.

The protein resides in the membrane. The enzyme catalyses S-ubiquitinyl-[E2 ubiquitin-conjugating enzyme]-L-cysteine + [acceptor protein]-L-lysine = [E2 ubiquitin-conjugating enzyme]-L-cysteine + N(6)-ubiquitinyl-[acceptor protein]-L-lysine.. It participates in protein modification; protein ubiquitination. The sequence is that of RING-H2 finger protein ATL52 (ATL52) from Arabidopsis thaliana (Mouse-ear cress).